Here is a 416-residue protein sequence, read N- to C-terminus: MAHSPVAVQVPGMQNNIADPEELFTKLERIGKGSFGEVFKGIDNRTQQVVAIKIIDLEEAEDEIEDIQQEITVLSQCDSSYVTKYYGSYLKGSKLWIIMEYLGGGSALDLLRAGPFDEFQIATMLKEILKGLDYLHSEKKIHRDIKAANVLLSEQGDVKLADFGVAGQLTDTQIKRNTFVGTPFWMAPEVIQQSAYDSKADIWSLGITAIELAKGEPPNSDMHPMRVLFLIPKNNPPTLVGDFTKSFKEFIDACLNKDPSFRPTAKELLKHKFIVKNSKKTSYLTELIDRFKRWKAEGHSDDESDSEGSDSESTSRENNTHPEWSFTTVRKKPDPKKVQNGAEQDLVQTLSCLSMIITPAFAELKQQDENNASRNQAIEELEKSIAVAEAACPGITDKMVKKLIEKFQKCSADESP.

At Ala-2 the chain carries N-acetylalanine. A Phosphoserine modification is found at Ser-4. The Protein kinase domain maps to 24–274; the sequence is FTKLERIGKG…AKELLKHKFI (251 aa). ATP contacts are provided by residues 30–38 and Lys-53; that span reads IGKGSFGEV. Catalysis depends on Asp-144, which acts as the Proton acceptor. A Phosphothreonine; by autocatalysis modification is found at Thr-178. Residues 297–340 are disordered; it reads EGHSDDESDSEGSDSESTSRENNTHPEWSFTTVRKKPDPKKVQN. Residues Ser-300, Ser-304, Ser-306, Ser-309, and Ser-325 each carry the phosphoserine modification. Phosphothreonine occurs at positions 327 and 328.

It belongs to the protein kinase superfamily. STE Ser/Thr protein kinase family. STE20 subfamily. In terms of assembly, homodimer. Interacts with PDCD10. Interacts with GOLGA2. Interacts with CTTNBP2NL. Interacts with RIPOR1 (via C-terminus); this interaction occurs in a PDCD10-dependent and Rho-independent manner. Interacts with PDCD10; this interaction is required for the association of STK26 with RIPOR1. Part of the core of STRIPAK complexes composed of PP2A catalytic and scaffolding subunits, the striatins (PP2A regulatory subunits), the striatin-associated proteins MOB4, STRIP1 and STRIP2, PDCD10 and members of the STE20 kinases, such as STK24 and STK26. Requires Mg(2+) as cofactor.

It is found in the cytoplasm. The protein resides in the golgi apparatus. The enzyme catalyses L-seryl-[protein] + ATP = O-phospho-L-seryl-[protein] + ADP + H(+). The catalysed reaction is L-threonyl-[protein] + ATP = O-phospho-L-threonyl-[protein] + ADP + H(+). Its activity is regulated as follows. Interaction with Golgi matrix protein GOLGA2 leads to autophosphorylation on Thr-178, possibly as a consequence of stabilization of dimer formation. May also be activated by C-terminal cleavage. Functionally, serine/threonine-protein kinase that acts as a mediator of cell growth. Modulates apoptosis. In association with STK24 negatively regulates Golgi reorientation in polarized cell migration upon RHO activation. Phosphorylates ATG4B at 'Ser-383', thereby increasing autophagic flux. Part of the striatin-interacting phosphatase and kinase (STRIPAK) complexes. STRIPAK complexes have critical roles in protein (de)phosphorylation and are regulators of multiple signaling pathways including Hippo, MAPK, nuclear receptor and cytoskeleton remodeling. Different types of STRIPAK complexes are involved in a variety of biological processes such as cell growth, differentiation, apoptosis, metabolism and immune regulation. The chain is Serine/threonine-protein kinase 26 from Homo sapiens (Human).